A 224-amino-acid polypeptide reads, in one-letter code: Ribonuclease 3 (224 aa).

The RNase III domain occupies 5–127; sequence ANRLQRRLGY…IIGAIYLDSD (123 aa). Mg(2+) is bound at residue glutamate 40. Residue aspartate 44 is part of the active site. 2 residues coordinate Mg(2+): aspartate 113 and glutamate 116. The active site involves glutamate 116. Residues 154-224 form the DRBM domain; it reads DPKTRLQECL…AELALKQLES (71 aa).

Belongs to the ribonuclease III family. In terms of assembly, homodimer. Mg(2+) is required as a cofactor.

The protein resides in the cytoplasm. It carries out the reaction Endonucleolytic cleavage to 5'-phosphomonoester.. In terms of biological role, digests double-stranded RNA. Involved in the processing of primary rRNA transcript to yield the immediate precursors to the large and small rRNAs (23S and 16S). Processes some mRNAs, and tRNAs when they are encoded in the rRNA operon. Processes pre-crRNA and tracrRNA of type II CRISPR loci if present in the organism. This chain is Ribonuclease 3, found in Photobacterium profundum (strain SS9).